The chain runs to 141 residues: Aspartate 1-decarboxylase 1 (141 aa).

Serine 25 acts as the Schiff-base intermediate with substrate; via pyruvic acid in catalysis. At serine 25 the chain carries Pyruvic acid (Ser). Residue threonine 57 coordinates substrate. The active-site Proton donor is tyrosine 58. 73-75 (GPA) serves as a coordination point for substrate.

It belongs to the PanD family. Heterooctamer of four alpha and four beta subunits. The cofactor is pyruvate. In terms of processing, is synthesized initially as an inactive proenzyme, which is activated by self-cleavage at a specific serine bond to produce a beta-subunit with a hydroxyl group at its C-terminus and an alpha-subunit with a pyruvoyl group at its N-terminus.

It is found in the cytoplasm. The catalysed reaction is L-aspartate + H(+) = beta-alanine + CO2. It participates in cofactor biosynthesis; (R)-pantothenate biosynthesis; beta-alanine from L-aspartate: step 1/1. Its function is as follows. Catalyzes the pyruvoyl-dependent decarboxylation of aspartate to produce beta-alanine. The protein is Aspartate 1-decarboxylase 1 of Paenarthrobacter aurescens (strain TC1).